The following is a 200-amino-acid chain: Large ribosomal subunit protein bL25 (200 aa).

Disordered regions lie at residues 1–20 and 179–200; these read MTIE…ASRR and PVVA…GEAA.

This sequence belongs to the bacterial ribosomal protein bL25 family. CTC subfamily. As to quaternary structure, part of the 50S ribosomal subunit; part of the 5S rRNA/L5/L18/L25 subcomplex. Contacts the 5S rRNA. Binds to the 5S rRNA independently of L5 and L18.

In terms of biological role, this is one of the proteins that binds to the 5S RNA in the ribosome where it forms part of the central protuberance. The sequence is that of Large ribosomal subunit protein bL25 from Azoarcus sp. (strain BH72).